The primary structure comprises 927 residues: Protein translocase subunit SecA (927 aa).

Residues Gln86, 104–108, and Asp494 contribute to the ATP site; that span reads GEGKT. The segment at 853 to 927 is disordered; the sequence is YTAPDEDGTP…GSKAKRGKRR (75 aa). The span at 860 to 879 shows a compositional bias: basic and acidic residues; the sequence is GTPHAEVEAVDPGARERTSE. The span at 907-927 shows a compositional bias: basic residues; sequence RAKRRGASARSGSKAKRGKRR.

Belongs to the SecA family. Monomer and homodimer. Part of the essential Sec protein translocation apparatus which comprises SecA, SecYEG and auxiliary proteins SecDF. Other proteins may also be involved.

Its subcellular location is the cell membrane. The protein resides in the cytoplasm. The catalysed reaction is ATP + H2O + cellular proteinSide 1 = ADP + phosphate + cellular proteinSide 2.. Part of the Sec protein translocase complex. Interacts with the SecYEG preprotein conducting channel. Has a central role in coupling the hydrolysis of ATP to the transfer of proteins into and across the cell membrane, serving as an ATP-driven molecular motor driving the stepwise translocation of polypeptide chains across the membrane. The chain is Protein translocase subunit SecA from Kocuria rhizophila (strain ATCC 9341 / DSM 348 / NBRC 103217 / DC2201).